We begin with the raw amino-acid sequence, 153 residues long: 3-hydroxyacyl-[acyl-carrier-protein] dehydratase FabZ (153 aa).

His58 is a catalytic residue.

This sequence belongs to the thioester dehydratase family. FabZ subfamily.

It is found in the cytoplasm. It catalyses the reaction a (3R)-hydroxyacyl-[ACP] = a (2E)-enoyl-[ACP] + H2O. Its function is as follows. Involved in unsaturated fatty acids biosynthesis. Catalyzes the dehydration of short chain beta-hydroxyacyl-ACPs and long chain saturated and unsaturated beta-hydroxyacyl-ACPs. In Bradyrhizobium diazoefficiens (strain JCM 10833 / BCRC 13528 / IAM 13628 / NBRC 14792 / USDA 110), this protein is 3-hydroxyacyl-[acyl-carrier-protein] dehydratase FabZ.